The following is a 623-amino-acid chain: NAD-dependent malic enzyme, mitochondrial (623 aa).

A mitochondrion-targeting transit peptide spans 1–31 (MLVLCSRSRLTSSLIRRLKDQIANVSNHRSF). The fumarate site is built by arginine 88 and arginine 122. The active-site Proton donor is the serine 143. Residue arginine 196 participates in (S)-malate binding. Arginine 196 contributes to the NAD(+) binding site. Lysine 214 functions as the Proton acceptor in the catalytic mechanism. A divalent metal cation contacts are provided by glutamate 285 and aspartate 286. An NAD(+)-binding site is contributed by asparagine 289. Aspartate 309 lines the a divalent metal cation pocket. Alanine 345 is an NAD(+) binding site. (S)-malate contacts are provided by asparagine 464 and asparagine 509.

Belongs to the malic enzymes family. In terms of assembly, heterodimer of two related subunits. Mg(2+) is required as a cofactor. Mn(2+) serves as cofactor.

The protein localises to the mitochondrion matrix. It carries out the reaction (S)-malate + NAD(+) = pyruvate + CO2 + NADH. The protein operates within photosynthesis; C4 acid pathway. The sequence is that of NAD-dependent malic enzyme, mitochondrial from Amaranthus hypochondriacus (Prince-of-Wales feather).